A 129-amino-acid chain; its full sequence is Holo-[acyl-carrier-protein] synthase (129 aa).

Positions 8 and 58 each coordinate Mg(2+).

This sequence belongs to the P-Pant transferase superfamily. AcpS family. Requires Mg(2+) as cofactor.

Its subcellular location is the cytoplasm. The enzyme catalyses apo-[ACP] + CoA = holo-[ACP] + adenosine 3',5'-bisphosphate + H(+). Functionally, transfers the 4'-phosphopantetheine moiety from coenzyme A to a Ser of acyl-carrier-protein. The polypeptide is Holo-[acyl-carrier-protein] synthase (Geobacillus kaustophilus (strain HTA426)).